Here is a 704-residue protein sequence, read N- to C-terminus: MMGPKANAAAAGDLPEYAEVDPTGRYGRYNDVLGKGASKTVYRAFDEYQGMEVAWNQVKLHDFLQSPEDLERLYCEIHLLKTLKHRNIMKFYTSWVDVSRRNINFITEMFTSGTLRQYRQKHMRVNIWAVKHWCRQILSGLLYLHSHDPPIIHRDLKCDNIFVNGNQGEVKIGDLGLAAILRKSHAVHCVGTPEFMAPEVYEEEYNELVDIYSFGMCVLEMVTFEYPYSECTHPVQIYKKVISGTKPEALYKVKDPMVRQFVEKCLATASRRLSARELLKDPFLQVDDLVFCPGDGDYSLMNYLRQPYLEHAYSNVSMMSNGLSESIDEDTPTEDRWDCEDDDIKADGIDLFNGHEDEPLGNVDITIKGRKSEDGSIFLRLRIADNDGHVRNIYFPFDIEADTALSVATEMVAELDITDHEVTRIAEMIDGEVSALVPDWRPGPGIEESQDTTYCHNCGSNVSSCGSLYAYMSSAARGCQCAELHGRFEEITFQANGEQTDLQDSGGSSDDGGGQTQHVKDQEAVHSNGFVQMGRRGPRDQFCFSSFQEQSCSPRHYEYDTSLQAKGFDMKHEVKMAKYKARKMAHLRRAIHPSLDFDNLNGERRMKSSLNKLQSFHIGKNHNFRIPTCERSPGARDAEEDPDIFNLAYHSRHPDPGAQRARHCEVDAQSSPDLMFTARSYYTGAQLPTNLPRTKSVTLNAVDA.

Residues 27–284 form the Protein kinase domain; the sequence is GRYNDVLGKG…ARELLKDPFL (258 aa). Residues 107 to 110 and lysine 157 contribute to the ATP site; that span reads TEMF. The active-site Proton acceptor is the aspartate 174. The disordered stretch occupies residues 499-521; it reads QTDLQDSGGSSDDGGGQTQHVKD.

The protein belongs to the protein kinase superfamily. Ser/Thr protein kinase family. WNK subfamily.

The enzyme catalyses L-seryl-[protein] + ATP = O-phospho-L-seryl-[protein] + ADP + H(+). It catalyses the reaction L-threonyl-[protein] + ATP = O-phospho-L-threonyl-[protein] + ADP + H(+). The polypeptide is Probable serine/threonine-protein kinase WNK1 (WNK1) (Oryza sativa subsp. japonica (Rice)).